Here is a 137-residue protein sequence, read N- to C-terminus: Putative pre-16S rRNA nuclease (137 aa).

Belongs to the YqgF nuclease family.

Its subcellular location is the cytoplasm. In terms of biological role, could be a nuclease involved in processing of the 5'-end of pre-16S rRNA. This chain is Putative pre-16S rRNA nuclease, found in Buchnera aphidicola subsp. Schizaphis graminum (strain Sg).